A 292-amino-acid polypeptide reads, in one-letter code: MNRLKLLVKAPAKINLSLDVLGKRQDGYHEVKMIMTTIDLADRLELMELAEDRIEILSHNRYVPDDQRNLAYQAAKLLKEKFNVKKGVSITIEKTIPVAAGLAGGSSDAAATLRGLNKLWNLGLTIDQLAELGAEIGSDVSFCVYGGTAIATGRGEQIEHIKTPPSCWVILAKPHIGVSTADVYGNLKLNRVTHPNVDKMVDVINAGDYKGICDTVGNVLEDVTFAMHPEVARIKAQMKRFGADAVLMSGSGPTVFGLVHHDSRMHRIYNGLKGFCEQVYAVRLLGERETLE.

Residue Lys13 is part of the active site. Residue 97-107 (PVAAGLAGGSS) coordinates ATP. Asp139 is an active-site residue.

Belongs to the GHMP kinase family. IspE subfamily.

It carries out the reaction 4-CDP-2-C-methyl-D-erythritol + ATP = 4-CDP-2-C-methyl-D-erythritol 2-phosphate + ADP + H(+). It participates in isoprenoid biosynthesis; isopentenyl diphosphate biosynthesis via DXP pathway; isopentenyl diphosphate from 1-deoxy-D-xylulose 5-phosphate: step 3/6. Catalyzes the phosphorylation of the position 2 hydroxy group of 4-diphosphocytidyl-2C-methyl-D-erythritol. The sequence is that of 4-diphosphocytidyl-2-C-methyl-D-erythritol kinase from Bacillus thuringiensis (strain Al Hakam).